We begin with the raw amino-acid sequence, 358 residues long: MKVGVALSGGVDSAVALYLLLKEGHEVKAFHMKTKEDEFFLKKEIKKKVCCSPSDTADAIRIARSLGVEIEIVDVREVFREKVIEPFKRDLLRGLTPNPCVHCNRYVKFGYFMDYVLSQGFDAFASGHYARVEFSGKYGKKVIKKGVDGKKDQSYFLARIEPWRIEKLLFPNGIYTKEEIRRIAEEAGIHVAKKQESQDVCFIPDGSIENFLKDEGITLSEGKVITEKGEVVGHHRGYPLYTVGQRKGLKIEKFGERLYVREKIPESNVVVVSGLEDVFFSGLIAEDPVWHVEVPEEFRCVCRVRKKSEEAPAVVRVRDNEVEVRFEKKVFAVTPGQIAAFYDEDTLLGGAIIKEGIR.

Residues 6 to 13 (ALSGGVDS) and M32 contribute to the ATP site. Residue C103 is the Nucleophile of the active site. C103 and C201 are joined by a disulfide. An ATP-binding site is contributed by G127. The interaction with tRNA stretch occupies residues 151–153 (KDQ). C201 serves as the catalytic Cysteine persulfide intermediate.

This sequence belongs to the MnmA/TRMU family.

The protein localises to the cytoplasm. It carries out the reaction S-sulfanyl-L-cysteinyl-[protein] + uridine(34) in tRNA + AH2 + ATP = 2-thiouridine(34) in tRNA + L-cysteinyl-[protein] + A + AMP + diphosphate + H(+). In terms of biological role, catalyzes the 2-thiolation of uridine at the wobble position (U34) of tRNA, leading to the formation of s(2)U34. This is tRNA-specific 2-thiouridylase MnmA from Thermotoga sp. (strain RQ2).